A 267-amino-acid polypeptide reads, in one-letter code: Phosphate import ATP-binding protein PstB (267 aa).

Residues 21 to 262 (VAARNLDFYY…PSKQQTEDYI (242 aa)) form the ABC transporter domain. 53-60 (GPSGCGKS) is a binding site for ATP.

It belongs to the ABC transporter superfamily. Phosphate importer (TC 3.A.1.7) family. The complex is composed of two ATP-binding proteins (PstB), two transmembrane proteins (PstC and PstA) and a solute-binding protein (PstS).

It is found in the cell inner membrane. It carries out the reaction phosphate(out) + ATP + H2O = ADP + 2 phosphate(in) + H(+). Part of the ABC transporter complex PstSACB involved in phosphate import. Responsible for energy coupling to the transport system. The polypeptide is Phosphate import ATP-binding protein PstB (Xanthomonas euvesicatoria pv. vesicatoria (strain 85-10) (Xanthomonas campestris pv. vesicatoria)).